Here is a 554-residue protein sequence, read N- to C-terminus: Phosphomethylpyrimidine synthase (554 aa).

Residues Asn188, Met217, Tyr246, His282, 302–304 (SRG), 343–346 (DGLR), and Glu382 each bind substrate. A Zn(2+)-binding site is contributed by His386. Tyr409 contacts substrate. Zn(2+) is bound at residue His450. 3 residues coordinate [4Fe-4S] cluster: Cys530, Cys533, and Cys538.

This sequence belongs to the ThiC family. As to quaternary structure, homodimer. [4Fe-4S] cluster serves as cofactor.

The enzyme catalyses 5-amino-1-(5-phospho-beta-D-ribosyl)imidazole + S-adenosyl-L-methionine = 4-amino-2-methyl-5-(phosphooxymethyl)pyrimidine + CO + 5'-deoxyadenosine + formate + L-methionine + 3 H(+). It participates in cofactor biosynthesis; thiamine diphosphate biosynthesis. In terms of biological role, catalyzes the synthesis of the hydroxymethylpyrimidine phosphate (HMP-P) moiety of thiamine from aminoimidazole ribotide (AIR) in a radical S-adenosyl-L-methionine (SAM)-dependent reaction. The polypeptide is Phosphomethylpyrimidine synthase (Coxiella burnetii (strain Dugway 5J108-111)).